Here is a 1163-residue protein sequence, read N- to C-terminus: Type IV pilus biogenesis factor PilY1 (1163 aa).

Residues 1–30 form the signal peptide; the sequence is MKSALHQIGKTSLAAALSGAVLLSAQTTHA. The tract at residues 329–352 is disordered; the sequence is SVGNADSTSRSLPDGKSYSSQTPY. The Ca(2+) site is built by Asp-600, Asp-602, Asn-604, and Asp-608. The segment at 619–621 is integrin-binding motif RGD; it reads RGD. Positions 851, 853, 855, 857, and 859 each coordinate Ca(2+). The tract at residues 1138-1163 is disordered; that stretch reads SGECLTVNPGPNTRGRQNWRPIEGKN.

This sequence belongs to the PilY1 family. As to quaternary structure, interacts (via C-terminal 532-1163) with host integrins alpha-V/beta-3 (ITGAV/ITGB3) and alpha-V/beta-5 (ITGAV/ITGB5).

Its subcellular location is the fimbrium. It localises to the membrane. The protein localises to the cytoplasm. It is found in the cytosol. In terms of biological role, involved in pilus assembly, twitching motility and adhesion to host cells. Primes type IV pili (T4P) assembly and is required for inclusion of minor pilins PilV, PilW and PilX to the surface pili. Stabilizes assembled pilus fibers likely by antagonizing retraction mediated by PilT. Calcium-binding and calcium release by PilY1 seem to be essential for twitching motility and for regulation of pilus retraction dynamics of PilT. Adhesin for human tissue specifically recognizing a host receptor localized or enriched on basolateral epithelial cell surfaces. Binds host integrins in an calcium-dependent manner in vitro and this interaction may be employed by the bacterium to mediate host epithelial cell binding in vivo. This is Type IV pilus biogenesis factor PilY1 from Pseudomonas aeruginosa (strain PAK).